Consider the following 319-residue polypeptide: Protease HtpX homolog (319 aa).

The next 2 membrane-spanning stretches (helical) occupy residues 6-26 (TAMLLAFMTVLFMAVGYVIGG) and 28-48 (GGMMIALVIAAGMNFFSYWNS). H130 contributes to the Zn(2+) binding site. Residue E131 is part of the active site. H134 lines the Zn(2+) pocket. 2 helical membrane-spanning segments follow: residues 145 to 165 (LTATLAGAISMLGNFAFFFGG) and 172 to 192 (PLGFIGVLIAMIVAPLAAMLV). E201 contacts Zn(2+). The tract at residues 277-319 (MARETSTGSTAPVRPDNAGRKSRSVPRTGWGRGGSEPPKGPWS) is disordered.

It belongs to the peptidase M48B family. Zn(2+) serves as cofactor.

It is found in the cell inner membrane. The sequence is that of Protease HtpX homolog from Rhizobium meliloti (strain 1021) (Ensifer meliloti).